The sequence spans 421 residues: Serine hydroxymethyltransferase (421 aa).

Residues Leu118 and 122 to 124 (GHL) each bind (6S)-5,6,7,8-tetrahydrofolate. Lys226 is subject to N6-(pyridoxal phosphate)lysine.

It belongs to the SHMT family. In terms of assembly, homodimer. The cofactor is pyridoxal 5'-phosphate.

The protein localises to the cytoplasm. The catalysed reaction is (6R)-5,10-methylene-5,6,7,8-tetrahydrofolate + glycine + H2O = (6S)-5,6,7,8-tetrahydrofolate + L-serine. It functions in the pathway one-carbon metabolism; tetrahydrofolate interconversion. The protein operates within amino-acid biosynthesis; glycine biosynthesis; glycine from L-serine: step 1/1. Catalyzes the reversible interconversion of serine and glycine with tetrahydrofolate (THF) serving as the one-carbon carrier. This reaction serves as the major source of one-carbon groups required for the biosynthesis of purines, thymidylate, methionine, and other important biomolecules. Also exhibits THF-independent aldolase activity toward beta-hydroxyamino acids, producing glycine and aldehydes, via a retro-aldol mechanism. The sequence is that of Serine hydroxymethyltransferase from Mycoplasmopsis agalactiae (strain NCTC 10123 / CIP 59.7 / PG2) (Mycoplasma agalactiae).